Consider the following 1152-residue polypeptide: Syntaxin-binding protein 5 (1152 aa).

The disordered stretch occupies residues 14-35 (TAGSSSASQQQQQQQHPPGNRE). The span at 17 to 28 (SSSASQQQQQQQ) shows a compositional bias: low complexity. WD repeat units follow at residues 62 to 95 (SALA…CYCQ), 102 to 141 (VIQL…SLKF), 146 to 182 (VTFC…GYVI), 201 to 235 (HISD…DYRY), 241 to 273 (IHSV…PAKP), 295 to 337 (PILK…KSTA), 345 to 379 (IVDF…LIDL), 401 to 478 (TCCE…YKLK), 506 to 620 (QIIS…ELVI), and 634 to 696 (TSLA…SGAG). Disordered regions lie at residues 555–596 (VDTP…GLRD) and 675–731 (SNDP…QKVN). At serine 693 the chain carries Phosphoserine. A compositionally biased stretch (low complexity) spans 713-722 (SPTSGSSSPH). A phosphoserine mark is found at serine 724 and serine 760. The residue at position 763 (threonine 763) is a Phosphothreonine. At serine 783 the chain carries Phosphoserine. Threonine 785 is subject to Phosphothreonine. Position 786 is a phosphoserine (serine 786). 4 WD repeats span residues 795 to 852 (ISAL…SGTI), 861 to 935 (RMAF…QSCA), 940 to 984 (ITET…LDVY), and 998 to 1021 (CFAN…TYSQ). Basic and acidic residues predominate over residues 883-893 (NVAEEKDEKEK). The segment at 883–907 (NVAEEKDEKEKLKKRRPVSVSPSSS) is disordered. Residues serine 901 and serine 903 each carry the phosphoserine modification. Residue threonine 1040 is modified to Phosphothreonine. Residues serine 1059 and serine 1132 each carry the phosphoserine modification. A v-SNARE coiled-coil homology domain is found at 1087 to 1147 (GIEGVKGAAS…HEMMLKYKDK (61 aa)).

Belongs to the WD repeat L(2)GL family. Part of a complex that contains STX1, STXBP5, SNAP25 and SYT1. Interacts with STX1A and STX4A via its v-SNARE homology domain. Part of a complex that contains STXBP5, STX4A and SNAP23. As to expression, detected in heart, spleen, lung, skeletal muscle, liver and kidney (at protein level). Detected in brain, particularly in the olfactory bulb and in hippocampus. Detected in the tenia tecta and in the piriform layer of the brain cortex.

It is found in the cytoplasm. It localises to the cell membrane. The protein resides in the membrane. Functionally, plays a regulatory role in calcium-dependent exocytosis and neurotransmitter release. Inhibits membrane fusion between transport vesicles and the plasma membrane. May modulate the assembly of trans-SNARE complexes between transport vesicles and the plasma membrane. Competes with STXBP1 for STX1 binding. Inhibits translocation of GLUT4 from intracellular vesicles to the plasma membrane. In Mus musculus (Mouse), this protein is Syntaxin-binding protein 5 (Stxbp5).